The chain runs to 382 residues: MGDWSALGKLLDKVQAYSTAGGKVWLSVLFIFRILLLGTAVESAWGDEQSAFRCNTQQPGCENVCYDKSFPISHVRFWVLQIIFVSVPTLLYLAHVFYVMRKEEKLNKKEEELKVAQTDGVNVEMHLKQIEIKKFKYGIEEHGKVKMRGGLLRTYIISILFKSVFEVAFLLIQWYIYGFSLSAVYTCKRDPCPHQVDCFLSRPTEKTIFIIFMLVVSLVSLALNIIELFYVFFKGVKDRVKGKSDPYHATTGPLSPSKDCGSPKYAYFNGCSSPTAPLSPMSPPGYKLVTGDRNNSSCRNYNKQASEQNWANYSAEQNRMGQAGSTISNSHAQPFDFPDDNQNSKKLATGHELQPLAIVDQRPSSRASSRASSRPRPDDLEI.

The Cytoplasmic portion of the chain corresponds to 2 to 23 (GDWSALGKLLDKVQAYSTAGGK). S5 carries the post-translational modification Phosphoserine. A helical membrane pass occupies residues 24 to 44 (VWLSVLFIFRILLLGTAVESA). Residues 45–76 (WGDEQSAFRCNTQQPGCENVCYDKSFPISHVR) are Extracellular-facing. Cystine bridges form between C54–C192 and C187–C198. Residues 77 to 97 (FWVLQIIFVSVPTLLYLAHVF) form a helical membrane-spanning segment. Residues 98–155 (YVMRKEEKLNKKEEELKVAQTDGVNVEMHLKQIEIKKFKYGIEEHGKVKMRGGLLRTY) lie on the Cytoplasmic side of the membrane. A Glycyl lysine isopeptide (Lys-Gly) (interchain with G-Cter in SUMO) cross-link involves residue K144. Residues 156–176 (IISILFKSVFEVAFLLIQWYI) form a helical membrane-spanning segment. At 177–207 (YGFSLSAVYTCKRDPCPHQVDCFLSRPTEKT) the chain is on the extracellular side. Residues 208-228 (IFIIFMLVVSLVSLALNIIEL) traverse the membrane as a helical segment. The Cytoplasmic portion of the chain corresponds to 229-382 (FYVFFKGVKD…SRPRPDDLEI (154 aa)). K237 participates in a covalent cross-link: Glycyl lysine isopeptide (Lys-Gly) (interchain with G-Cter in SUMO). Residues 244-382 (SDPYHATTGP…SRPRPDDLEI (139 aa)) form an interaction with NOV region. Y247 carries the phosphotyrosine modification. 3 positions are modified to phosphoserine: S255, S257, and S262. The interval 264–382 (KYAYFNGCSS…SRPRPDDLEI (119 aa)) is interaction with UBQLN4. C271 bears the S-nitrosocysteine mark. Phosphothreonine is present on T275. Residues S306 and S314 each carry the phosphoserine modification. The span at 317–332 (QNRMGQAGSTISNSHA) shows a compositional bias: polar residues. A disordered region spans residues 317–382 (QNRMGQAGST…SRPRPDDLEI (66 aa)). S325 carries the phosphoserine; by CK1 modification. A Phosphothreonine modification is found at T326. Residues S328 and S330 each carry the phosphoserine; by CK1 modification. Phosphoserine is present on residues S344 and S365. A compositionally biased stretch (low complexity) spans 362-374 (RPSSRASSRASSR). Phosphoserine; by PKC/PRKCG and PKC/PRKCD is present on S368. S369 and S373 each carry phosphoserine.

It belongs to the connexin family. Alpha-type (group II) subfamily. In terms of assembly, a connexon is composed of a hexamer of connexins. Interacts with SGSM3. Interacts with RIC1/CIP150. Interacts with CNST and CSNK1D. Interacts (via C-terminus) with TJP1. Interacts (via C-terminus) with SRC (via SH3 domain). Interacts (not ubiquitinated) with UBQLN4 (via UBA domain). Interacts with NOV. Interacts with TMEM65. Interacts with ANK3/ANKG and PKP2. Phosphorylation at Ser-325, Ser-328 and Ser-330 by CK1 modulates gap junction assembly. Phosphorylated at Ser-368 by PRKCG; phosphorylation induces disassembly of gap junction plaques and inhibition of gap junction activity. Phosphorylation at Ser-368 by PRKCD triggers its internalization into small vesicles leading to proteasome-mediated degradation. Post-translationally, sumoylated with SUMO1, SUMO2 and SUMO3, which may regulate the level of functional Cx43 gap junctions at the plasma membrane. May be desumoylated by SENP1 or SENP2. In terms of processing, S-nitrosylation at Cys-271 is enriched at the muscle endothelial gap junction in arteries, it augments channel permeability and may regulate of smooth muscle cell to endothelial cell communication. Acetylated in the developing cortex; leading to delocalization from the cell membrane.

It is found in the cell membrane. The protein localises to the cell junction. It localises to the gap junction. The protein resides in the endoplasmic reticulum. Functionally, gap junction protein that acts as a regulator of bladder capacity. A gap junction consists of a cluster of closely packed pairs of transmembrane channels, the connexons, through which materials of low MW diffuse from one cell to a neighboring cell. May play a critical role in the physiology of hearing by participating in the recycling of potassium to the cochlear endolymph. Negative regulator of bladder functional capacity: acts by enhancing intercellular electrical and chemical transmission, thus sensitizing bladder muscles to cholinergic neural stimuli and causing them to contract. May play a role in cell growth inhibition through the regulation of NOV expression and localization. Plays an essential role in gap junction communication in the ventricles. In Ursus americanus (American black bear), this protein is Gap junction alpha-1 protein (GJA1).